We begin with the raw amino-acid sequence, 648 residues long: Pesticidal crystal protein Cry19Aa (648 aa).

It belongs to the delta endotoxin family.

In terms of biological role, promotes colloidosmotic lysis by binding to the midgut epithelial cells of mosquitos. In Bacillus thuringiensis subsp. jegathesan, this protein is Pesticidal crystal protein Cry19Aa (cry19Aa).